The sequence spans 127 residues: Large ribosomal subunit protein bL20 (127 aa).

It belongs to the bacterial ribosomal protein bL20 family.

Functionally, binds directly to 23S ribosomal RNA and is necessary for the in vitro assembly process of the 50S ribosomal subunit. It is not involved in the protein synthesizing functions of that subunit. The chain is Large ribosomal subunit protein bL20 from Renibacterium salmoninarum (strain ATCC 33209 / DSM 20767 / JCM 11484 / NBRC 15589 / NCIMB 2235).